Reading from the N-terminus, the 697-residue chain is Serotransferrin (697 aa).

Residues 1-19 form the signal peptide; the sequence is MRLTVGALLACAALGLCLA. 2 Transferrin-like domains span residues 25 to 347 and 360 to 682; these read VKWC…NQQE and VKWC…NMRK. 2 disulfides stabilise this stretch: cysteine 28–cysteine 67 and cysteine 38–cysteine 58. Arginine 42 is modified (dimethylated arginine). Fe(3+)-binding residues include aspartate 82 and tyrosine 114. Disulfide bonds link cysteine 137/cysteine 213, cysteine 156/cysteine 350, cysteine 177/cysteine 193, cysteine 180/cysteine 196, cysteine 190/cysteine 198, cysteine 246/cysteine 260, cysteine 363/cysteine 395, and cysteine 373/cysteine 386. Hydrogencarbonate-binding residues include threonine 139, arginine 143, alanine 145, and glycine 146. Tyrosine 207 lines the Fe(3+) pocket. Histidine 268 contributes to the Fe(3+) binding site. Phosphoserine is present on serine 388. Aspartate 410 and tyrosine 448 together coordinate Fe(3+). Disulfide bonds link cysteine 420–cysteine 692, cysteine 435–cysteine 655, cysteine 472–cysteine 543, cysteine 496–cysteine 683, cysteine 506–cysteine 520, cysteine 517–cysteine 526, cysteine 583–cysteine 597, and cysteine 633–cysteine 638. Threonine 474, arginine 478, alanine 480, and glycine 481 together coordinate hydrogencarbonate. Asparagine 513 carries N-linked (GlcNAc...) asparagine glycosylation. Tyrosine 537 provides a ligand contact to Fe(3+). Histidine 605 provides a ligand contact to Fe(3+). Position 684 is a phosphoserine (serine 684).

This sequence belongs to the transferrin family. Monomer. Part of a complex composed of SLC40A1/ferroportin, TF/transferrin and HEPH/hephaestin that transfers iron from cells to transferrin. Expressed by the liver and secreted in plasma.

Its subcellular location is the secreted. Its function is as follows. Transferrins are iron binding transport proteins which can bind two Fe(3+) ions in association with the binding of an anion, usually bicarbonate. It is responsible for the transport of iron from sites of absorption and heme degradation to those of storage and utilization. Serum transferrin may also have a further role in stimulating cell proliferation. The polypeptide is Serotransferrin (Tf) (Mus musculus (Mouse)).